Consider the following 632-residue polypeptide: 2-hydroxyacyl-CoA lyase 2 (632 aa).

Residues 13-33 (LFPSFLLLACGTLVAALLGAA) traverse the membrane as a helical segment. Residue E98 coordinates thiamine diphosphate. Residues 470–550 (DFVGTAAHLV…VMALVGNDAG (81 aa)) are thiamine pyrophosphate binding. Residues D521 and N547 each coordinate Mg(2+).

The protein belongs to the TPP enzyme family. Requires Mg(2+) as cofactor. Thiamine diphosphate serves as cofactor. Expressed in all tissues tested, with highest expression in heart, pancreas and placenta.

It localises to the endoplasmic reticulum membrane. It carries out the reaction 2-hydroxyoctadecanoyl-CoA = heptadecanal + formyl-CoA. It catalyses the reaction (2R)-hydroxyhexadecanoyl-CoA = pentadecanal + formyl-CoA. Endoplasmic reticulum 2-OH acyl-CoA lyase involved in the cleavage (C1 removal) reaction in the fatty acid alpha-oxydation in a thiamine pyrophosphate (TPP)-dependent manner. Involved in the phytosphingosine degradation pathway. In Homo sapiens (Human), this protein is 2-hydroxyacyl-CoA lyase 2.